Here is a 524-residue protein sequence, read N- to C-terminus: MFTARIARSMASESAPAASSVAPGSSGAPMADCVLEVRGVGKSFPGVVALDGVQFRVRRGTVHALMGENGAGKSTLMKIIAGVYTPDQGEILINGEPVVLNGPLDALDRGIAMIHQELNLMPYMTVAENIWIRREPKNRFGLIDHAELRRRTAALFERLSIDIDPETDVRTLTVASRQMVEIAKAVSFDSDVLIMDEPTSALTDKEVTHLFRIIRQLREQGKGIVYITHKMNELFEIADEFSVFRDGKYIGTHASSDVTRDDIIRMMVGREITQMFPKEEVPIGDVVLSVKDLCVDGVFRDVSFELRAGEILGVAGLVGSGRSNVAEALFGVVPATSGEIRIDGKPVRISTPAQAMKHGMAFLTEDRKDSGCFLNLDLLANMEAAVLSRRYVKFNFVQQAQLKRDCEEMSRMLRVKSPGLHEEIQNLSGGNQQKVLIGRWLLTQPRILILDEPTRGIDVGAKAEIHRLVSALAGKGVAVLMISSEMPEVLGMSDRVMVMHEGRMTGIVDRKDADQVRIMDLASR.

ABC transporter domains lie at 35-271 and 281-520; these read LEVR…VGRE and VPIG…RIMD. An ATP-binding site is contributed by 67–74; sequence GENGAGKS.

This sequence belongs to the ABC transporter superfamily. Carbohydrate importer 2 (CUT2) (TC 3.A.1.2) family.

The protein localises to the cell inner membrane. The catalysed reaction is D-ribose(out) + ATP + H2O = D-ribose(in) + ADP + phosphate + H(+). It carries out the reaction D-galactose(out) + ATP + H2O = D-galactose(in) + ADP + phosphate + H(+). Functionally, part of an ABC transporter complex involved in carbohydrate import. Could be involved in ribose, galactose and/or methyl galactoside import. Responsible for energy coupling to the transport system. The protein is Putative ribose/galactose/methyl galactoside import ATP-binding protein 1 of Burkholderia cenocepacia (strain HI2424).